We begin with the raw amino-acid sequence, 201 residues long: Holliday junction branch migration complex subunit RuvA (201 aa).

The tract at residues M1–A64 is domain I. A domain II region spans residues Q65 to E143. The tract at residues H144 to S154 is flexible linker. The interval S154–L201 is domain III.

The protein belongs to the RuvA family. In terms of assembly, homotetramer. Forms an RuvA(8)-RuvB(12)-Holliday junction (HJ) complex. HJ DNA is sandwiched between 2 RuvA tetramers; dsDNA enters through RuvA and exits via RuvB. An RuvB hexamer assembles on each DNA strand where it exits the tetramer. Each RuvB hexamer is contacted by two RuvA subunits (via domain III) on 2 adjacent RuvB subunits; this complex drives branch migration. In the full resolvosome a probable DNA-RuvA(4)-RuvB(12)-RuvC(2) complex forms which resolves the HJ.

The protein resides in the cytoplasm. Its function is as follows. The RuvA-RuvB-RuvC complex processes Holliday junction (HJ) DNA during genetic recombination and DNA repair, while the RuvA-RuvB complex plays an important role in the rescue of blocked DNA replication forks via replication fork reversal (RFR). RuvA specifically binds to HJ cruciform DNA, conferring on it an open structure. The RuvB hexamer acts as an ATP-dependent pump, pulling dsDNA into and through the RuvAB complex. HJ branch migration allows RuvC to scan DNA until it finds its consensus sequence, where it cleaves and resolves the cruciform DNA. The chain is Holliday junction branch migration complex subunit RuvA from Actinobacillus pleuropneumoniae serotype 5b (strain L20).